A 337-amino-acid polypeptide reads, in one-letter code: MPIRLGINGFGRIGRMALRASLNIDGVQVVAINDPFTDCEYMEYMLKYDTVHGRFDGTIAHSEDSITVNGNKISVFKSMKPEEIPWGKTQVDIVLECTGRFTTKKDAELHITGGCKRVIISAPSADAPMFVCGCNLETYDPSTMKVISNASCTTNCLAPLAMVVNKKFGIKEGLMTTVHAVTATQLPVDGPSKKDWRGGRSCGANVIPSSTGAAKAVGKVLPALNGKLTGMAFRVPVPDVSVVDLTCTLEKDATYDEICAEIKRGSENELKGIMTYTNEDVVSSDFLSTTSTCNFDSKAGIMLNSRFVKLVAWYDNEFGYANKLVELAKYVGSKGCQ.

Residues 12-13 (RI), Asp34, and Met79 each bind NAD(+). Residues 151–153 (SCT), Thr182, 211–212 (TG), and Arg234 each bind D-glyceraldehyde 3-phosphate. The active-site Nucleophile is Cys152. Asn316 is an NAD(+) binding site.

The protein belongs to the glyceraldehyde-3-phosphate dehydrogenase family. In terms of assembly, homotetramer.

Its subcellular location is the cytoplasm. It catalyses the reaction D-glyceraldehyde 3-phosphate + phosphate + NAD(+) = (2R)-3-phospho-glyceroyl phosphate + NADH + H(+). The protein operates within carbohydrate degradation; glycolysis; pyruvate from D-glyceraldehyde 3-phosphate: step 1/5. In Giardia intestinalis (Giardia lamblia), this protein is Glyceraldehyde-3-phosphate dehydrogenase 1 (GAP1).